A 220-amino-acid chain; its full sequence is Peptide methionine sulfoxide reductase MsrA (220 aa).

C54 is a catalytic residue.

Belongs to the MsrA Met sulfoxide reductase family.

It carries out the reaction L-methionyl-[protein] + [thioredoxin]-disulfide + H2O = L-methionyl-(S)-S-oxide-[protein] + [thioredoxin]-dithiol. The catalysed reaction is [thioredoxin]-disulfide + L-methionine + H2O = L-methionine (S)-S-oxide + [thioredoxin]-dithiol. In terms of biological role, has an important function as a repair enzyme for proteins that have been inactivated by oxidation. Catalyzes the reversible oxidation-reduction of methionine sulfoxide in proteins to methionine. This is Peptide methionine sulfoxide reductase MsrA from Salinispora tropica (strain ATCC BAA-916 / DSM 44818 / JCM 13857 / NBRC 105044 / CNB-440).